The sequence spans 421 residues: Aspartokinase (421 aa).

ATP is bound at residue 7 to 10 (KYGG). 25–30 (RIVETK) is a substrate binding site. Position 41 (Ser-41) interacts with ATP. Substrate-binding positions include 45–49 (DTTDD), Glu-74, 125–126 (LD), 151–154 (RGGS), and Ser-154. ATP-binding positions include 174–175 (TD), 180–185 (FTADPR), and Lys-210. ACT domains lie at 267–348 (VTVV…GKVS) and 349–421 (LIGA…GTGR). Substrate is bound by residues Asp-274, 274 to 279 (DVPGYA), 292 to 294 (NID), Gln-298, 360 to 361 (VT), 374 to 375 (NI), and 381 to 382 (SE).

Belongs to the aspartokinase family. In terms of assembly, heterotetramer consisting of 2 isoforms Alpha (catalytic and regulation) and of a homodimer of 2 isoforms Beta (regulation).

It carries out the reaction L-aspartate + ATP = 4-phospho-L-aspartate + ADP. It functions in the pathway amino-acid biosynthesis; L-lysine biosynthesis via DAP pathway; (S)-tetrahydrodipicolinate from L-aspartate: step 1/4. The protein operates within amino-acid biosynthesis; L-methionine biosynthesis via de novo pathway; L-homoserine from L-aspartate: step 1/3. It participates in amino-acid biosynthesis; L-threonine biosynthesis; L-threonine from L-aspartate: step 1/5. Feedback inhibition by lysine and threonine. Its function is as follows. Catalyzes the phosphorylation of the beta-carboxyl group of aspartic acid with ATP to yield 4-phospho-L-aspartate, which is involved in the branched biosynthetic pathway leading to the biosynthesis of amino acids lysine, threonine, isoleucine and methionine. The protein is Aspartokinase (ask) of Mycolicibacterium smegmatis (Mycobacterium smegmatis).